The chain runs to 466 residues: Ras-GEF domain-containing family member 1C (466 aa).

The interval 1–37 is disordered; the sequence is MPQTLSASDMVTPGSLSPPPTEPTDGEQAGQPLLDGA. One can recognise an N-terminal Ras-GEF domain in the interval 34–164; sequence LDGAPSSASL…LLQALHQKLA (131 aa). A Ras-GEF domain is found at 200 to 446; sequence DPYTLAQQLT…YLASYESESP (247 aa).

Its function is as follows. Guanine nucleotide exchange factor (GEF). This is Ras-GEF domain-containing family member 1C (RASGEF1C) from Homo sapiens (Human).